A 98-amino-acid chain; its full sequence is NADH-ubiquinone oxidoreductase chain 4L (98 aa).

Helical transmembrane passes span 1–21 (MTSISLNLIMAFSLALAGVLI), 28–48 (STLLCLEGMMLSLFILMALLI), and 59–79 (APLILLVFSACEAGVGLALLV).

The protein belongs to the complex I subunit 4L family. As to quaternary structure, core subunit of respiratory chain NADH dehydrogenase (Complex I) which is composed of 45 different subunits.

It is found in the mitochondrion inner membrane. It catalyses the reaction a ubiquinone + NADH + 5 H(+)(in) = a ubiquinol + NAD(+) + 4 H(+)(out). Functionally, core subunit of the mitochondrial membrane respiratory chain NADH dehydrogenase (Complex I) which catalyzes electron transfer from NADH through the respiratory chain, using ubiquinone as an electron acceptor. Part of the enzyme membrane arm which is embedded in the lipid bilayer and involved in proton translocation. The protein is NADH-ubiquinone oxidoreductase chain 4L (MT-ND4L) of Vombatus ursinus (Common wombat).